Here is an 89-residue protein sequence, read N- to C-terminus: Mu-like prophage FluMu DNA-binding protein Ner (89 aa).

The segment at residues 57-76 (ERLVANAIGVPPEVIWAGRF) is a DNA-binding region (H-T-H motif).

It belongs to the ner transcriptional regulatory family.

Negative regulator of transcription starting from the Pe and Pc promoters of Mu. Also negatively regulates its own gene transcription. This is Mu-like prophage FluMu DNA-binding protein Ner (nlp) from Haemophilus influenzae (strain ATCC 51907 / DSM 11121 / KW20 / Rd).